Consider the following 316-residue polypeptide: Olfactory receptor 51J1 (316 aa).

Residues 1 to 31 are Extracellular-facing; sequence MKISNNSLGFLPTTFILVGIPGLESEHLWIS. An N-linked (GlcNAc...) asparagine glycan is attached at Asn5. A helical transmembrane segment spans residues 32 to 52; the sequence is VPFSLIYIIIFLGNGIILHVI. The Cytoplasmic segment spans residues 53–63; it reads RTDIALHQPMY. The helical transmembrane segment at 64 to 84 threads the bilayer; the sequence is LFLAMLALAEVRVSASTLPTV. Residues 85 to 104 are Extracellular-facing; it reads LGIFLFGNTEISLEACLFPD. Residues Cys100 and Cys191 are joined by a disulfide bond. A helical membrane pass occupies residues 105–125; it reads VLHPFFIHDGASCAAGHVFGP. Residues 126–161 lie on the Cytoplasmic side of the membrane; it reads LYSHLQPTELHSYPDTAQGLWHRSYYRTEKHYAHGS. A helical membrane pass occupies residues 162–182; sequence VAHSLMASALLWPQCPLTFLL. The Extracellular segment spans residues 183–191; sequence SAPQSYLSC. The chain crosses the membrane as a helical span at residues 192–212; the sequence is GNISVNNIYGIFIVTSTFGLD. The Cytoplasmic portion of the chain corresponds to 213–242; it reads SLLIVISYGLILHTVLGIATGEGRKKALNT. A helical membrane pass occupies residues 243–263; the sequence is CGSHVCAVLAYYVPMIGLSIV. Residues 264 to 275 are Extracellular-facing; it reads HRLGHRVSPLLQ. A helical transmembrane segment spans residues 276-296; the sequence is AMMANAYLFFPPVVNPIVYSI. Residues 297–316 are Cytoplasmic-facing; that stretch reads KTKEIHGAIVRMLLEKRRRV.

The protein belongs to the G-protein coupled receptor 1 family.

The protein resides in the cell membrane. In terms of biological role, odorant receptor. The polypeptide is Olfactory receptor 51J1 (OR51J1) (Homo sapiens (Human)).